Reading from the N-terminus, the 264-residue chain is MSAISSVFSSDKSVFIPYISLGDPDYESCISWADALIRGGAGILELGIPFSDPVADGPVIQKAFKRALAYPFSMKKILEITAEIHKLHPETPLVYLTYFNPLYSMGLEAFTESAKNSGIQGLIIPDLPFDTSEAEEFFSQLERKKIDFIHLVTPATTIDRIQSMKSFASGFIYYVTSYGVTGERRALAVGLKERIQMVRNKVGLPVCAGFGISTADQAKEISTYANGVIIGSAVQKIIEESGSNREVCISKLFTYASEIRASMK.

Active-site proton acceptor residues include Glu-45 and Asp-56.

This sequence belongs to the TrpA family. In terms of assembly, tetramer of two alpha and two beta chains.

The enzyme catalyses (1S,2R)-1-C-(indol-3-yl)glycerol 3-phosphate + L-serine = D-glyceraldehyde 3-phosphate + L-tryptophan + H2O. The protein operates within amino-acid biosynthesis; L-tryptophan biosynthesis; L-tryptophan from chorismate: step 5/5. Functionally, the alpha subunit is responsible for the aldol cleavage of indoleglycerol phosphate to indole and glyceraldehyde 3-phosphate. This Leptospira borgpetersenii serovar Hardjo-bovis (strain JB197) protein is Tryptophan synthase alpha chain.